The chain runs to 299 residues: Oxygen-dependent coproporphyrinogen-III oxidase (299 aa).

Ser92 lines the substrate pocket. Residues His96 and His106 each coordinate Mn(2+). His106 acts as the Proton donor in catalysis. 108-110 serves as a coordination point for substrate; that stretch reads NVR. The Mn(2+) site is built by His145 and His175. Positions 240-275 are important for dimerization; the sequence is YVEFNLVWDRGTLFGLQTGGRTESILMSMPPLVRWE. 258 to 260 contacts substrate; that stretch reads GGR.

Belongs to the aerobic coproporphyrinogen-III oxidase family. As to quaternary structure, homodimer. Requires Mn(2+) as cofactor.

It is found in the cytoplasm. It carries out the reaction coproporphyrinogen III + O2 + 2 H(+) = protoporphyrinogen IX + 2 CO2 + 2 H2O. The protein operates within porphyrin-containing compound metabolism; protoporphyrin-IX biosynthesis; protoporphyrinogen-IX from coproporphyrinogen-III (O2 route): step 1/1. Involved in the heme biosynthesis. Catalyzes the aerobic oxidative decarboxylation of propionate groups of rings A and B of coproporphyrinogen-III to yield the vinyl groups in protoporphyrinogen-IX. This Escherichia coli O127:H6 (strain E2348/69 / EPEC) protein is Oxygen-dependent coproporphyrinogen-III oxidase.